We begin with the raw amino-acid sequence, 570 residues long: Urease subunit alpha (570 aa).

The region spanning 131 to 570 (GGFDSHIHFI…LPLAQRYFMF (440 aa)) is the Urease domain. Ni(2+) is bound by residues His136, His138, and Lys219. An N6-carboxylysine modification is found at Lys219. His221 provides a ligand contact to substrate. The Ni(2+) site is built by His248 and His274. The Proton donor role is filled by His322. Asp362 serves as a coordination point for Ni(2+).

Belongs to the metallo-dependent hydrolases superfamily. Urease alpha subunit family. Heterotrimer of UreA (gamma), UreB (beta) and UreC (alpha) subunits. Three heterotrimers associate to form the active enzyme. Requires Ni cation as cofactor. Carboxylation allows a single lysine to coordinate two nickel ions.

The protein localises to the cytoplasm. It carries out the reaction urea + 2 H2O + H(+) = hydrogencarbonate + 2 NH4(+). It functions in the pathway nitrogen metabolism; urea degradation; CO(2) and NH(3) from urea (urease route): step 1/1. The chain is Urease subunit alpha from Rhodopseudomonas palustris (strain TIE-1).